A 180-amino-acid polypeptide reads, in one-letter code: Trafficking protein particle complex subunit 3 (180 aa).

Cysteine 68 carries S-palmitoyl cysteine lipidation.

This sequence belongs to the TRAPP small subunits family. BET3 subfamily. In terms of assembly, homodimer. Component of the multisubunit transport protein particle (TRAPP) complex, which includes at least TRAPPC2, TRAPPC2L, TRAPPC3, TRAPPC3L, TRAPPC4, TRAPPC5, TRAPPC8, TRAPPC9, TRAPPC10, TRAPPC11 and TRAPPC12. Heterodimer with TRAPPC6A. The heterodimer TRAPPC3-TRAPPC6A interacts with TRAPPC2L. Heterodimer with TRAPPC6b. The heterodimer TRAPPC6B-TRAPPC3 interacts with TRAPPC1 likely providing a core for TRAPP complex formation.

It localises to the golgi apparatus. The protein localises to the cis-Golgi network. It is found in the endoplasmic reticulum. Functionally, may play a role in vesicular transport from endoplasmic reticulum to Golgi. In Homo sapiens (Human), this protein is Trafficking protein particle complex subunit 3.